The sequence spans 614 residues: UvrABC system protein C (614 aa).

The GIY-YIG domain maps to 14 to 91; sequence TSPGCYIHKD…IKENKPKYNI (78 aa). A UVR domain is found at 196–231; the sequence is NKIIDELKGKMAAAAQTMEFERAAEYRDLIQAIGTL. The interval 595-614 is disordered; that stretch reads LPQVAEERVDYQTEGNHNKP.

The protein belongs to the UvrC family. As to quaternary structure, interacts with UvrB in an incision complex.

It is found in the cytoplasm. The UvrABC repair system catalyzes the recognition and processing of DNA lesions. UvrC both incises the 5' and 3' sides of the lesion. The N-terminal half is responsible for the 3' incision and the C-terminal half is responsible for the 5' incision. This chain is UvrABC system protein C, found in Streptococcus pneumoniae (strain Taiwan19F-14).